Consider the following 138-residue polypeptide: MTKSIPRIGSRRGGRIASRKNARRIPKGVIHVQASFNNTIVTVTDVTGRVVSWSSAGTCGFRGTRRGTPFAAQTAAANAIRTVIDQGMQRAEVMIKGPGLGRDAALRAIRRSGILLSFVRDVTPMPHNGCRPPKKRRV.

The segment at 1–21 is disordered; the sequence is MTKSIPRIGSRRGGRIASRKN. The segment covering 9-21 has biased composition (basic residues); sequence GSRRGGRIASRKN.

The protein belongs to the universal ribosomal protein uS11 family. As to quaternary structure, part of the 30S ribosomal subunit.

The protein resides in the plastid. Its subcellular location is the chloroplast. In Calycanthus floridus var. glaucus (Eastern sweetshrub), this protein is Small ribosomal subunit protein uS11c.